The following is a 335-amino-acid chain: Phosphate acyltransferase (335 aa).

This sequence belongs to the PlsX family. As to quaternary structure, homodimer. Probably interacts with PlsY.

The protein resides in the cytoplasm. The enzyme catalyses a fatty acyl-[ACP] + phosphate = an acyl phosphate + holo-[ACP]. Its pathway is lipid metabolism; phospholipid metabolism. Catalyzes the reversible formation of acyl-phosphate (acyl-PO(4)) from acyl-[acyl-carrier-protein] (acyl-ACP). This enzyme utilizes acyl-ACP as fatty acyl donor, but not acyl-CoA. The sequence is that of Phosphate acyltransferase from Clostridium botulinum (strain Loch Maree / Type A3).